A 405-amino-acid polypeptide reads, in one-letter code: Pentatricopeptide repeat-containing protein At3g14580, mitochondrial (405 aa).

The N-terminal 37 residues, 1 to 37 (MILRRLVLSATSNSNPRRSQSLSSSGVRILSSSSSDR), are a transit peptide targeting the mitochondrion. Residues 13–44 (NSNPRRSQSLSSSGVRILSSSSSDRYTSSSQR) are disordered. 8 PPR repeats span residues 94 to 124 (TESL…IKLE), 130 to 165 (SEEF…GCWP), 166 to 200 (SSKS…GVEI), 201 to 235 (DACC…KSRP), 236 to 270 (NVMT…RIEP), 271 to 305 (DTIT…GCEP), 306 to 340 (NPGT…GMRP), and 341 to 375 (SFLS…GFVP).

It belongs to the PPR family. P subfamily.

It is found in the mitochondrion. The sequence is that of Pentatricopeptide repeat-containing protein At3g14580, mitochondrial from Arabidopsis thaliana (Mouse-ear cress).